A 566-amino-acid polypeptide reads, in one-letter code: 15-cis-phytoene desaturase, chloroplastic/chromoplastic (566 aa).

A chloroplast and chromoplast-targeting transit peptide spans 1 to 86 (MVVFGNVSAA…ASLSASFRSA (86 aa)). Residues Ala-103, 122–123 (EA), Lys-130, 147–148 (HI), and Tyr-153 each bind FAD. Arg-288 provides a ligand contact to substrate. FAD-binding residues include Ile-330 and Asp-519. Position 527 (Ala-527) interacts with substrate. Met-529 lines the FAD pocket.

This sequence belongs to the carotenoid/retinoid oxidoreductase family. Homotetramer. The cofactor is FAD.

The protein localises to the plastid. It is found in the chloroplast. It localises to the chromoplast. The protein resides in the membrane. It carries out the reaction 2 a plastoquinone + 15-cis-phytoene = 9,9',15-tri-cis-zeta-carotene + 2 a plastoquinol. It participates in carotenoid biosynthesis; lycopene biosynthesis. In terms of biological role, converts phytoene into zeta-carotene via the intermediary of phytofluene by the symmetrical introduction of two double bonds at the C-11 and C-11' positions of phytoene with a concomitant isomerization of two neighboring double bonds at the C9 and C9' positions from trans to cis. The chain is 15-cis-phytoene desaturase, chloroplastic/chromoplastic (PDS) from Arabidopsis thaliana (Mouse-ear cress).